The primary structure comprises 154 residues: MLDAKKIATTVKDLVKPISDNLGFRLFDVEFKPENGWVLRIIIDKEGGVTIDDCEELSKRVSALLDVEDVITSSYFLEVSSPGLTRELKEKWHYEFFKGKYARLYLKEKIDNKQEYAGYIDSVEDDTLVLRLLDKTLKIPFDKIAKARLDVEKW.

This sequence belongs to the RimP family.

It is found in the cytoplasm. Required for maturation of 30S ribosomal subunits. The sequence is that of Ribosome maturation factor RimP from Hydrogenobaculum sp. (strain Y04AAS1).